Consider the following 372-residue polypeptide: F-box/kelch-repeat protein At2g44630 (372 aa).

Polar residues predominate over residues Met1–Gln13. The interval Met1 to Pro21 is disordered. Positions Pro21 to Arg67 constitute an F-box domain. 2 Kelch repeats span residues Glu136–Gly181 and Ile183–Leu228.

The polypeptide is F-box/kelch-repeat protein At2g44630 (Arabidopsis thaliana (Mouse-ear cress)).